We begin with the raw amino-acid sequence, 75 residues long: Putative antitoxin VapB17 (75 aa).

In terms of biological role, putative antitoxin component of a possible type II toxin-antitoxin (TA) system. The cognate toxin is VapC17. In Mycobacterium tuberculosis (strain CDC 1551 / Oshkosh), this protein is Putative antitoxin VapB17 (vapB17).